The following is a 105-amino-acid chain: MKLRHLLLGAGLGICTAVVVRQYVMKPYISSEKALRIVKSAFKQRGPIDGSWIYTQPEPYNINGETVQVYKTGITRSAFGELEQYEVMVDAKTGEIVDVIDTIAS.

This is an uncharacterized protein from Bacillus subtilis (strain 168).